A 569-amino-acid polypeptide reads, in one-letter code: Peptide transporter PTR_C (569 aa).

Residues 1 to 25 show a composition bias toward basic and acidic residues; the sequence is MSQNVDEKVVHDDASVIRSVDRSES. Positions 1–43 are disordered; sequence MSQNVDEKVVHDDASVIRSVDRSESDSYPDSVSPEGAEPSEEE. Residues 54 to 74 traverse the membrane as a helical segment; it reads VPLACWLVAIVELAERFSYYG. The N-linked (GlcNAc...) asparagine glycan is linked to asparagine 98. Helical transmembrane passes span 104-124, 134-154, and 159-179; these read ALSY…AWVA, ISIF…TSLP, and NTSL…TGGV. The N-linked (GlcNAc...) asparagine glycan is linked to asparagine 212. 8 helical membrane passes run 215–235, 245–265, 322–342, 366–386, 398–418, 444–464, 479–499, and 510–530; these read IQNV…SVIA, FWAA…ALFL, ALYA…YGQM, IDSI…YPFI, IFWG…LQHF, VALQ…ASIT, SFIM…GIAL, and WTYT…WFLF.

The protein belongs to the major facilitator superfamily. Proton-dependent oligopeptide transporter (POT/PTR) (TC 2.A.17) family.

It is found in the cell membrane. The catalysed reaction is a dipeptide(out) + H(+)(out) = a dipeptide(in) + H(+)(in). It carries out the reaction an L-amino acid tripeptide(out) + H(+)(out) = an L-amino acid tripeptide(in) + H(+)(in). Functionally, peptide transporter that exploits the inwardly directed proton motive force to facilitate the cellular uptake of di/tripeptides. Shows strong uptake specificity towards the dipeptides Tyr-Phe and Leu-Gly and the tripeptide Phe-Gly-Gly, when compared to PTR_A and PTR_B. Also able to import peptide-based antifungals such as the peptide-nucleoside drug nikkomycin Z as well as the glucosamine-6-phosphate synthase inhibitor, L-norvalyl-N3-(4-methoxyfumaroyl)-L-2,3-diaminopropionoic acid (Nva-FMDP). The protein is Peptide transporter PTR_C of Candidozyma auris (Yeast).